The following is a 219-amino-acid chain: Probable GTP-binding protein EngB (219 aa).

An EngB-type G domain is found at Gly-33 to His-217. GTP is bound by residues Gly-41–Ser-48, Gly-68–Glu-72, Asp-95–Gly-98, Thr-162–Asp-165, and Thr-196–Ser-198. Residues Ser-48 and Thr-70 each contribute to the Mg(2+) site.

The protein belongs to the TRAFAC class TrmE-Era-EngA-EngB-Septin-like GTPase superfamily. EngB GTPase family. It depends on Mg(2+) as a cofactor.

Necessary for normal cell division and for the maintenance of normal septation. The polypeptide is Probable GTP-binding protein EngB (Allorhizobium ampelinum (strain ATCC BAA-846 / DSM 112012 / S4) (Agrobacterium vitis (strain S4))).